Here is a 631-residue protein sequence, read N- to C-terminus: MAAHLVKRCTCLLREAARQAPAMAPVGRLRLAWVAHKTLTSSATSPISHLPGSLMEPVEKERASTPYIEKQVDHLIKKATRPEELLELLGGSHDLDSNQAAMVLIRLSHLLSEKPEDKGLLIQDAHFHQLLCLLNSQIASVWHGTLSKLLGSLYALGIPKASKELQSVEQEVRWRMRKLKYKHLAFLAESCATLSQEQHSQELLAELLTHLERRWTEIEDSHTLVTVMMKVGHLSEPLMNRLEDKCLELVEHFGPNELRKVLVMLAAQSRRSVPLLRAISYHLVQKPFSLTKDVLLDVAYAYGKLSFHQTQVSQRLATDLLSLMPSLTSGEVAHCAKSFALLKWLSLPLFEAFAQHVLNRAQDITLPHLCSVLLAFARLNFHPDQEDQFFSLVHEKLGSELPGLEPALQVDLVWALCVLQQAREAELQAVLHPEFHIQFLGGKSQKDQNTFQKLLHINATALLEYPEYSGPLLPASAVAPGPSALDRKVTPLQKELQETLKGLLGSADKGSLEVATQYGWVLDAEVLLDSDGEFLPVRDFVAPHLAQPTGSQSPPPGSKRLAFLRWEFPNFNSRSKDLLGRFVLARRHIVAAGFLIVDVPFYEWLELKSEWQKGAYLKDKMRKAVAEELAK.

Residues 1 to 107 (MAAHLVKRCT…NQAAMVLIRL (107 aa)) constitute a mitochondrion transit peptide. S553 is subject to Phosphoserine. Residues 561–619 (LAFLRWEFPNFNSRSKDLLGRFVLARRHIVAAGFLIVDVPFYEWLELKSEWQKGAYLKD) form the RAP domain.

The protein belongs to the FAST kinase family. As to expression, ubiquitously expressed. Expression detected in spleen, thymus, testis, ovary, colon, heart, smooth muscle, kidney, brain, lung, liver and white adipose tissue with highest expression in smooth muscle.

Its subcellular location is the mitochondrion matrix. Its function is as follows. Plays a role in processing of mitochondrial RNA precursors and in stabilization of a subset of mature mitochondrial RNA species, such as MT-CO1, MT-CO2, MT-CYB, MT-CO3, MT-ND3, MT-ND5 and MT-ATP8/6. May play a role in cell cycle progression. This Homo sapiens (Human) protein is FAST kinase domain-containing protein 4.